The following is a 230-amino-acid chain: Octanoyltransferase (230 aa).

The region spanning 38-215 (AGGADTLLLL…AVCAALDGVL (178 aa)) is the BPL/LPL catalytic domain. Residues 76 to 83 (RGGKITWH), 145 to 147 (AIG), and 158 to 160 (GFA) each bind substrate. Cysteine 176 (acyl-thioester intermediate) is an active-site residue.

Belongs to the LipB family.

It localises to the cytoplasm. It carries out the reaction octanoyl-[ACP] + L-lysyl-[protein] = N(6)-octanoyl-L-lysyl-[protein] + holo-[ACP] + H(+). It participates in protein modification; protein lipoylation via endogenous pathway; protein N(6)-(lipoyl)lysine from octanoyl-[acyl-carrier-protein]: step 1/2. Its function is as follows. Catalyzes the transfer of endogenously produced octanoic acid from octanoyl-acyl-carrier-protein onto the lipoyl domains of lipoate-dependent enzymes. Lipoyl-ACP can also act as a substrate although octanoyl-ACP is likely to be the physiological substrate. This Mycobacterium tuberculosis (strain ATCC 25177 / H37Ra) protein is Octanoyltransferase.